A 702-amino-acid polypeptide reads, in one-letter code: A-type inclusion protein A25 homolog (702 aa).

A disordered region spans residues 342-380 (TNTGIEEPHATGGDKEDQPIKVVHPPNNDKDDAIKSYNP). The segment covering 347–360 (EEPHATGGDKEDQP) has biased composition (basic and acidic residues). 2 coiled-coil regions span residues 420-522 (NGGE…RDGK) and 548-692 (EIDK…NNKT).

This sequence belongs to the poxviridae A25 protein family. Interacts (via N-terminus) with protein A26.

It localises to the virion. In terms of biological role, structural protein that forms a matrix surrounding the mature virion (MV) through interaction with protein A26. Presence of protein A25 in the virion structurally prevents direct virus-cell fusion mechanism. This chain is A-type inclusion protein A25 homolog, found in Variola virus (isolate Human/India/Ind3/1967) (VARV).